Here is a 476-residue protein sequence, read N- to C-terminus: Probable serine carboxypeptidase CPVL (476 aa).

A signal peptide spans 1 to 22 (MVGTMWKVIVSLVLLMPGSCDG). Residues Asn81 and Asn132 are each glycosylated (N-linked (GlcNAc...) asparagine). Ser204 is a catalytic residue. 2 N-linked (GlcNAc...) asparagine glycosylation sites follow: Asn307 and Asn346. Active-site residues include Asp388 and His448.

The protein belongs to the peptidase S10 family.

Its function is as follows. May be involved in the digestion of phagocytosed particles in the lysosome, participation in an inflammatory protease cascade, and trimming of peptides for antigen presentation. This is Probable serine carboxypeptidase CPVL (CPVL) from Pongo abelii (Sumatran orangutan).